The primary structure comprises 642 residues: Threonine--tRNA ligase (642 aa).

The 61-residue stretch at 1–61 (MPVIRFYDGS…REDAFIEFVD (61 aa)) folds into the TGS domain. The catalytic stretch occupies residues 243 to 534 (DHRKIGKFLQ…LIEECSGNLP (292 aa)). The Zn(2+) site is built by cysteine 334, histidine 385, and histidine 511.

This sequence belongs to the class-II aminoacyl-tRNA synthetase family. As to quaternary structure, homodimer. It depends on Zn(2+) as a cofactor.

It is found in the cytoplasm. It catalyses the reaction tRNA(Thr) + L-threonine + ATP = L-threonyl-tRNA(Thr) + AMP + diphosphate + H(+). In terms of biological role, catalyzes the attachment of threonine to tRNA(Thr) in a two-step reaction: L-threonine is first activated by ATP to form Thr-AMP and then transferred to the acceptor end of tRNA(Thr). Also edits incorrectly charged L-seryl-tRNA(Thr). In Buchnera aphidicola subsp. Acyrthosiphon pisum (strain Tuc7), this protein is Threonine--tRNA ligase.